The sequence spans 504 residues: Plasma protease C1 inhibitor (504 aa).

The signal sequence occupies residues 1–22 (MASKLTPLTLLLLLLAGDRAFS). A disordered region spans residues 23 to 75 (DSEVTSHSSQDPLVVQEGSRDSVPERDGSRSPIEHTGQSSTWPTTSGSTKISN). Residues 24-33 (SEVTSHSSQD) show a composition bias toward polar residues. Residues 40–55 (GSRDSVPERDGSRSPI) are compositionally biased toward basic and acidic residues. The span at 58 to 75 (TGQSSTWPTTSGSTKISN) shows a compositional bias: polar residues. Residues Asn75, Asn83, Asn107, Asn243, and Asn356 are each glycosylated (N-linked (GlcNAc...) asparagine). Residues 94–132 (AQLPEDSPSQSPVNSSSPPSTASAPPTQAPTEPLCPEPL) form a disordered region. The span at 100–125 (SPSQSPVNSSSPPSTASAPPTQAPTE) shows a compositional bias: low complexity.

Belongs to the serpin family. In terms of assembly, interacts with MASP1.

The protein localises to the secreted. Functionally, serine protease inhibitor, which acrs as a regulator of the classical complement pathway. Forms a proteolytically inactive stoichiometric complex with the C1r or C1s proteases. May also regulate blood coagulation, fibrinolysis and the generation of kinins. Very efficient inhibitor of FXIIa. Inhibits chymotrypsin and kallikrein. In Rattus norvegicus (Rat), this protein is Plasma protease C1 inhibitor (Serping1).